A 287-amino-acid chain; its full sequence is Acetyl-coenzyme A carboxylase carboxyl transferase subunit beta (287 aa).

In terms of domain architecture, CoA carboxyltransferase N-terminal spans 25 to 287 (VWTKCSACEQ…KMLNTHVIEE (263 aa)). 4 residues coordinate Zn(2+): C29, C32, C48, and C51. The segment at 29 to 51 (CSACEQVLYRAELERNLEVCPKC) adopts a C4-type zinc-finger fold.

This sequence belongs to the AccD/PCCB family. In terms of assembly, acetyl-CoA carboxylase is a heterohexamer composed of biotin carboxyl carrier protein (AccB), biotin carboxylase (AccC) and two subunits each of ACCase subunit alpha (AccA) and ACCase subunit beta (AccD). It depends on Zn(2+) as a cofactor.

It localises to the cytoplasm. The enzyme catalyses N(6)-carboxybiotinyl-L-lysyl-[protein] + acetyl-CoA = N(6)-biotinyl-L-lysyl-[protein] + malonyl-CoA. It participates in lipid metabolism; malonyl-CoA biosynthesis; malonyl-CoA from acetyl-CoA: step 1/1. Functionally, component of the acetyl coenzyme A carboxylase (ACC) complex. Biotin carboxylase (BC) catalyzes the carboxylation of biotin on its carrier protein (BCCP) and then the CO(2) group is transferred by the transcarboxylase to acetyl-CoA to form malonyl-CoA. This chain is Acetyl-coenzyme A carboxylase carboxyl transferase subunit beta, found in Aeromonas salmonicida (strain A449).